Consider the following 294-residue polypeptide: Protease HtpX homolog (294 aa).

The next 2 membrane-spanning stretches (helical) occupy residues 12–32 (VLFG…ASSF) and 34–54 (SPGV…YSYW). Position 138 (histidine 138) interacts with Zn(2+). The active site involves glutamate 139. Histidine 142 contacts Zn(2+). The next 2 membrane-spanning stretches (helical) occupy residues 152–172 (SVAG…VFFG) and 188–208 (LALL…QLAI). Glutamate 213 contacts Zn(2+).

Belongs to the peptidase M48B family. It depends on Zn(2+) as a cofactor.

It localises to the cell membrane. In Kineococcus radiotolerans (strain ATCC BAA-149 / DSM 14245 / SRS30216), this protein is Protease HtpX homolog.